The following is a 393-amino-acid chain: Homeobox protein knotted-1-like 4 (393 aa).

Positions 1–13 (MAFHNNHFNHFTD) are enriched in polar residues. Disordered regions lie at residues 1 to 39 (MAFH…PPNW) and 81 to 114 (QRGN…EKKE). Residues 286-306 (ELKHELKQGYKEKIVDIREEI) enclose the ELK domain. The homeobox; TALE-type DNA-binding region spans 307 to 370 (LRKRRAGKLP…NQRKRNWHSN (64 aa)). The segment at 363 to 393 (RKRNWHSNPSSSTVSKNKRRSNAGENSGRDR) is disordered. A compositionally biased stretch (polar residues) spans 368-377 (HSNPSSSTVS).

The protein belongs to the TALE/KNOX homeobox family. In terms of assembly, may form heterodimeric complex with the TALE/BELL proteins. Interacts with OFP1, OFP2, OFP4 and OFP12. Interacts with KNATM-B.

The protein localises to the nucleus. In Arabidopsis thaliana (Mouse-ear cress), this protein is Homeobox protein knotted-1-like 4 (KNAT4).